The primary structure comprises 336 residues: Dihydroorotate dehydrogenase (quinone) (336 aa).

Residues 62–66 (AGLDK) and T86 contribute to the FMN site. K66 contacts substrate. 111–115 (NRMGF) contacts substrate. FMN contacts are provided by N139 and N172. N172 contributes to the substrate binding site. S175 functions as the Nucleophile in the catalytic mechanism. N177 lines the substrate pocket. Residues K217 and T245 each contribute to the FMN site. Residue 246-247 (NT) participates in substrate binding. Residues G268, G297, and 318 to 319 (YS) contribute to the FMN site.

This sequence belongs to the dihydroorotate dehydrogenase family. Type 2 subfamily. In terms of assembly, monomer. FMN is required as a cofactor.

It is found in the cell membrane. The enzyme catalyses (S)-dihydroorotate + a quinone = orotate + a quinol. Its pathway is pyrimidine metabolism; UMP biosynthesis via de novo pathway; orotate from (S)-dihydroorotate (quinone route): step 1/1. Its function is as follows. Catalyzes the conversion of dihydroorotate to orotate with quinone as electron acceptor. In Hamiltonella defensa subsp. Acyrthosiphon pisum (strain 5AT), this protein is Dihydroorotate dehydrogenase (quinone).